Reading from the N-terminus, the 301-residue chain is Sulfate adenylyltransferase subunit 2 (301 aa).

The disordered stretch occupies residues 279-301 (RQGRLIDHDQDGSMEKKKQEGYF).

It belongs to the PAPS reductase family. CysD subfamily. As to quaternary structure, heterodimer composed of CysD, the smaller subunit, and CysN.

The catalysed reaction is sulfate + ATP + H(+) = adenosine 5'-phosphosulfate + diphosphate. It functions in the pathway sulfur metabolism; hydrogen sulfide biosynthesis; sulfite from sulfate: step 1/3. Its function is as follows. With CysN forms the ATP sulfurylase (ATPS) that catalyzes the adenylation of sulfate producing adenosine 5'-phosphosulfate (APS) and diphosphate, the first enzymatic step in sulfur assimilation pathway. APS synthesis involves the formation of a high-energy phosphoric-sulfuric acid anhydride bond driven by GTP hydrolysis by CysN coupled to ATP hydrolysis by CysD. The protein is Sulfate adenylyltransferase subunit 2 of Geotalea uraniireducens (strain Rf4) (Geobacter uraniireducens).